A 455-amino-acid chain; its full sequence is Exodeoxyribonuclease 7 large subunit (455 aa).

Belongs to the XseA family. In terms of assembly, heterooligomer composed of large and small subunits.

It is found in the cytoplasm. It catalyses the reaction Exonucleolytic cleavage in either 5'- to 3'- or 3'- to 5'-direction to yield nucleoside 5'-phosphates.. Bidirectionally degrades single-stranded DNA into large acid-insoluble oligonucleotides, which are then degraded further into small acid-soluble oligonucleotides. The chain is Exodeoxyribonuclease 7 large subunit from Koribacter versatilis (strain Ellin345).